The chain runs to 227 residues: 7-cyano-7-deazaguanine synthase (227 aa).

8–18 (VSGGADSATVL) serves as a coordination point for ATP. The Zn(2+) site is built by Cys192, Cys202, Cys205, and Cys208.

This sequence belongs to the QueC family. Zn(2+) serves as cofactor.

It catalyses the reaction 7-carboxy-7-deazaguanine + NH4(+) + ATP = 7-cyano-7-deazaguanine + ADP + phosphate + H2O + H(+). It participates in purine metabolism; 7-cyano-7-deazaguanine biosynthesis. In terms of biological role, catalyzes the ATP-dependent conversion of 7-carboxy-7-deazaguanine (CDG) to 7-cyano-7-deazaguanine (preQ(0)). The chain is 7-cyano-7-deazaguanine synthase from Rickettsia canadensis (strain McKiel).